The sequence spans 388 residues: DNA replication and repair protein RecF (388 aa).

ATP is bound at residue 30 to 37; that stretch reads GNNAQGKS.

The protein belongs to the RecF family.

It localises to the cytoplasm. Its function is as follows. The RecF protein is involved in DNA metabolism; it is required for DNA replication and normal SOS inducibility. RecF binds preferentially to single-stranded, linear DNA. It also seems to bind ATP. The polypeptide is DNA replication and repair protein RecF (Picosynechococcus sp. (strain ATCC 27264 / PCC 7002 / PR-6) (Agmenellum quadruplicatum)).